Here is a 798-residue protein sequence, read N- to C-terminus: RNA cytosine-C(5)-methyltransferase NSUN2 (798 aa).

A compositionally biased stretch (basic residues) spans 1 to 13; it reads MGRRNRRNRQRHQ. The tract at residues 1-30 is disordered; sequence MGRRNRRNRQRHQRSTEQRSPAEEEQRRKA. The span at 14–30 shows a compositional bias: basic and acidic residues; that stretch reads RSTEQRSPAEEEQRRKA. Residues 186 to 192, Asp217, Asp244, and Asp270 contribute to the S-adenosyl-L-methionine site; that span reads CAAPGSK. Cys323 acts as the Nucleophile in catalysis. 2 disordered regions span residues 476–499 and 723–798; these read DEPA…SSKT and KACD…ESVD. Basic and acidic residues predominate over residues 723–747; that stretch reads KACDEEHIDEKMDIDGAKEESKELS. Residues 751–762 show a composition bias toward acidic residues; it reads SGDDEDPKEEDV. Positions 763–772 are enriched in basic and acidic residues; it reads IDRGVLEHVA.

This sequence belongs to the class I-like SAM-binding methyltransferase superfamily. RsmB/NOP family. TRM4 subfamily.

The protein localises to the nucleus. It is found in the nucleolus. The protein resides in the cytoplasm. Its subcellular location is the mitochondrion. It localises to the cytoskeleton. The protein localises to the spindle. It is found in the secreted. The protein resides in the extracellular exosome. The catalysed reaction is cytidine(48) in tRNA + S-adenosyl-L-methionine = 5-methylcytidine(48) in tRNA + S-adenosyl-L-homocysteine + H(+). It carries out the reaction cytidine(49) in tRNA + S-adenosyl-L-methionine = 5-methylcytidine(49) in tRNA + S-adenosyl-L-homocysteine + H(+). It catalyses the reaction cytidine(50) in tRNA + S-adenosyl-L-methionine = 5-methylcytidine(50) in tRNA + S-adenosyl-L-homocysteine + H(+). The enzyme catalyses cytidine(34) in tRNA precursor + S-adenosyl-L-methionine = 5-methylcytidine(34) in tRNA precursor + S-adenosyl-L-homocysteine + H(+). The catalysed reaction is a cytidine in mRNA + S-adenosyl-L-methionine = a 5-methylcytidine in mRNA + S-adenosyl-L-homocysteine + H(+). Its function is as follows. RNA cytosine C(5)-methyltransferase that methylates cytosine to 5-methylcytosine (m5C) in various RNAs, such as tRNAs, mRNAs and some long non-coding RNAs (lncRNAs). Involved in various processes, such as epidermal stem cell differentiation, testis differentiation and maternal to zygotic transition during early development: acts by increasing protein synthesis; cytosine C(5)-methylation promoting tRNA stability and preventing mRNA decay. Methylates cytosine to 5-methylcytosine (m5C) at positions 34 and 48 of intron-containing tRNA(Leu)(CAA) precursors, and at positions 48, 49 and 50 of tRNA(Gly)(GCC) precursors. tRNA methylation is required generation of RNA fragments derived from tRNAs (tRFs). Also mediates C(5)-methylation of mitochondrial tRNAs. Catalyzes cytosine C(5)-methylation of mRNAs, leading to stabilize them and prevent mRNA decay. Cytosine C(5)-methylation of mRNAs also regulates mRNA export. Also mediates cytosine C(5)-methylation of non-coding RNAs, such as vault RNAs (vtRNAs), promoting their processing into regulatory small RNAs. Required for proper spindle assembly and chromosome segregation, independently of its methyltransferase activity. This Xenopus tropicalis (Western clawed frog) protein is RNA cytosine-C(5)-methyltransferase NSUN2.